A 401-amino-acid polypeptide reads, in one-letter code: Adenylosuccinate synthetase (401 aa).

Residues 12-18 (GDEGKGK) and 40-42 (GHT) contribute to the GTP site. The Proton acceptor role is filled by D13. Positions 13 and 40 each coordinate Mg(2+). Residues 13 to 16 (DEGK), 38 to 41 (NAGH), T128, R142, Q212, T227, and R290 contribute to the IMP site. The Proton donor role is filled by H41. 286–292 (ATTRRPR) provides a ligand contact to substrate. Residues R292, 318–320 (KAD), and 390–392 (STG) contribute to the GTP site.

This sequence belongs to the adenylosuccinate synthetase family. As to quaternary structure, homodimer. Mg(2+) is required as a cofactor.

It localises to the cytoplasm. It carries out the reaction IMP + L-aspartate + GTP = N(6)-(1,2-dicarboxyethyl)-AMP + GDP + phosphate + 2 H(+). It functions in the pathway purine metabolism; AMP biosynthesis via de novo pathway; AMP from IMP: step 1/2. In terms of biological role, plays an important role in the de novo pathway of purine nucleotide biosynthesis. Catalyzes the first committed step in the biosynthesis of AMP from IMP. This chain is Adenylosuccinate synthetase, found in Pseudothermotoga lettingae (strain ATCC BAA-301 / DSM 14385 / NBRC 107922 / TMO) (Thermotoga lettingae).